A 217-amino-acid chain; its full sequence is Octanoyltransferase (217 aa).

The 176-residue stretch at serine 32–glutamine 207 folds into the BPL/LPL catalytic domain. Substrate-binding positions include arginine 71–histidine 78, serine 138–glycine 140, and glycine 151–alanine 153. The Acyl-thioester intermediate role is filled by cysteine 169.

It belongs to the LipB family.

The protein localises to the cytoplasm. It catalyses the reaction octanoyl-[ACP] + L-lysyl-[protein] = N(6)-octanoyl-L-lysyl-[protein] + holo-[ACP] + H(+). The protein operates within protein modification; protein lipoylation via endogenous pathway; protein N(6)-(lipoyl)lysine from octanoyl-[acyl-carrier-protein]: step 1/2. Its function is as follows. Catalyzes the transfer of endogenously produced octanoic acid from octanoyl-acyl-carrier-protein onto the lipoyl domains of lipoate-dependent enzymes. Lipoyl-ACP can also act as a substrate although octanoyl-ACP is likely to be the physiological substrate. In Shewanella sp. (strain ANA-3), this protein is Octanoyltransferase.